A 90-amino-acid polypeptide reads, in one-letter code: Iron oxidase (90 aa).

Positions 1 to 37 form a signal peptide, tat-type signal; that stretch reads MSEKDKMITRRDALRNIAVVVGSVATTTMMGVGVADA. 4 residues coordinate [4Fe-4S] cluster: C57, C60, C69, and C82.

This sequence belongs to the high-potential iron-sulfur protein (HiPIP) family. As to quaternary structure, homomultimer. Post-translationally, predicted to be exported by the Tat system. The position of the signal peptide cleavage has been experimentally proven.

Its subcellular location is the periplasm. Functionally, catalyzes the oxidation of Fe(2+) to Fe(3+) coupled to cytochrome c552 reduction. In Acidithiobacillus ferrooxidans (Thiobacillus ferrooxidans), this protein is Iron oxidase (iro).